A 345-amino-acid chain; its full sequence is Biotin synthase (345 aa).

The 219-residue stretch at 38–256 folds into the Radical SAM core domain; sequence RQVQVSTLLS…IAVARIMMPA (219 aa). Positions 53, 57, and 60 each coordinate [4Fe-4S] cluster. Residues C97, C128, C188, and R260 each coordinate [2Fe-2S] cluster.

The protein belongs to the radical SAM superfamily. Biotin synthase family. In terms of assembly, homodimer. [4Fe-4S] cluster serves as cofactor. Requires [2Fe-2S] cluster as cofactor.

The enzyme catalyses (4R,5S)-dethiobiotin + (sulfur carrier)-SH + 2 reduced [2Fe-2S]-[ferredoxin] + 2 S-adenosyl-L-methionine = (sulfur carrier)-H + biotin + 2 5'-deoxyadenosine + 2 L-methionine + 2 oxidized [2Fe-2S]-[ferredoxin]. It participates in cofactor biosynthesis; biotin biosynthesis; biotin from 7,8-diaminononanoate: step 2/2. Its function is as follows. Catalyzes the conversion of dethiobiotin (DTB) to biotin by the insertion of a sulfur atom into dethiobiotin via a radical-based mechanism. This is Biotin synthase from Serratia proteamaculans (strain 568).